The chain runs to 406 residues: 2,3-bisphosphoglycerate-independent phosphoglycerate mutase (406 aa).

Positions 156-165 (ITEGDPHKEG) are enriched in basic and acidic residues. Residues 156–177 (ITEGDPHKEGVPIPEVKPLDNS) are disordered.

Belongs to the BPG-independent phosphoglycerate mutase family. A-PGAM subfamily.

The catalysed reaction is (2R)-2-phosphoglycerate = (2R)-3-phosphoglycerate. It participates in carbohydrate degradation; glycolysis; pyruvate from D-glyceraldehyde 3-phosphate: step 3/5. Its function is as follows. Catalyzes the interconversion of 2-phosphoglycerate and 3-phosphoglycerate. In Methanococcus aeolicus (strain ATCC BAA-1280 / DSM 17508 / OCM 812 / Nankai-3), this protein is 2,3-bisphosphoglycerate-independent phosphoglycerate mutase.